The primary structure comprises 446 residues: MADRTEQILTPSQLNTLARDLLEGSFPLVWVEAELGNVTRPASGHLYFTLKDARAQIRCAMFKPKSTWLKFQPREGLRVLARGRLTLYEARGDYQLVLDHMEEAGEGALRRAFEELRARLAAEGVFDAERKQPLPAHVRRLAVITSPSGAAVRDVLSVLARRFPLLEVDILPSLVQGDSAAAQITSLLQRADASGRYDVILITRGGGSLEDLWAFNDERLARAIAAAHTPVVSAVGHETDVSLSDFAADVRAPTPSVAAELLVPDQRELVARVRRAQARLSQLQQHTLGQAMQHADRLALRLRARSPQARLQLLQRRQEDAARHLRARMQHILERLQARVQRAQAGVQSHSPQRHLAPLQQRLRAAHPQAAMQRRLQQDHLHLRGLVRSLEAVSPLATVARGYAIVTRQADGSVVRSAAELTQGDRLRAQLADGSVTVVVDTSETG.

Belongs to the XseA family. Heterooligomer composed of large and small subunits.

The protein localises to the cytoplasm. It catalyses the reaction Exonucleolytic cleavage in either 5'- to 3'- or 3'- to 5'-direction to yield nucleoside 5'-phosphates.. Bidirectionally degrades single-stranded DNA into large acid-insoluble oligonucleotides, which are then degraded further into small acid-soluble oligonucleotides. The chain is Exodeoxyribonuclease 7 large subunit from Xanthomonas campestris pv. campestris (strain 8004).